We begin with the raw amino-acid sequence, 185 residues long: MKTHNDILAALAALPLFLTGAAFAAEPGMLDTLRNNIVQTWEQPQHYDLYLPAITWHARFAYSQEKIDSYNERPWGAGFGQSRWDEKGNWHGLYLMAFKDSFNKWEPIGGYGWEATWRPLEGSDFHWGAGYTVGVTMRDNWRYIPIPVILPMASVGYGPLTLQMTYIPGTYDNGNVYFAWLRLQF.

The signal sequence occupies residues 1-24; that stretch reads MKTHNDILAALAALPLFLTGAAFA. Active-site residues include histidine 57, aspartate 100, and serine 101.

Belongs to the lipid A palmitoyltransferase family. As to quaternary structure, homodimer.

It localises to the cell outer membrane. It catalyses the reaction a lipid A + a 1,2-diacyl-sn-glycero-3-phosphocholine = a hepta-acyl lipid A + a 2-acyl-sn-glycero-3-phosphocholine. The catalysed reaction is a lipid IVA + a 1,2-diacyl-sn-glycero-3-phosphocholine = a lipid IVB + a 2-acyl-sn-glycero-3-phosphocholine. The enzyme catalyses a lipid IIA + a 1,2-diacyl-sn-glycero-3-phosphocholine = a lipid IIB + a 2-acyl-sn-glycero-3-phosphocholine. In terms of biological role, transfers a fatty acid residue from the sn-1 position of a phospholipid to the N-linked hydroxyfatty acid chain on the proximal unit of lipid A or its precursors. In Edwardsiella tarda (strain FL6-60), this protein is Lipid A acyltransferase PagP.